We begin with the raw amino-acid sequence, 594 residues long: UvrABC system protein C (594 aa).

The GIY-YIG domain occupies 14–91 (DQPGCYLMKD…IKKYDPKYNI (78 aa)). Positions 196–231 (KEVRSELEIKMYEASEKLEFERAKELRDQIAHIDAI) constitute a UVR domain.

This sequence belongs to the UvrC family. As to quaternary structure, interacts with UvrB in an incision complex.

It is found in the cytoplasm. In terms of biological role, the UvrABC repair system catalyzes the recognition and processing of DNA lesions. UvrC both incises the 5' and 3' sides of the lesion. The N-terminal half is responsible for the 3' incision and the C-terminal half is responsible for the 5' incision. The chain is UvrABC system protein C from Bacillus cereus (strain B4264).